A 91-amino-acid polypeptide reads, in one-letter code: ATP synthase subunit c (91 aa).

The next 2 helical transmembrane spans lie at 4 to 24 (FTMC…GTGI) and 53 to 73 (IGLA…LIIL).

This sequence belongs to the ATPase C chain family. In terms of assembly, F-type ATPases have 2 components, F(1) - the catalytic core - and F(0) - the membrane proton channel. F(1) has five subunits: alpha(3), beta(3), gamma(1), delta(1), epsilon(1). F(0) has three main subunits: a(1), b(2) and c(10-14). The alpha and beta chains form an alternating ring which encloses part of the gamma chain. F(1) is attached to F(0) by a central stalk formed by the gamma and epsilon chains, while a peripheral stalk is formed by the delta and b chains.

The protein resides in the cell inner membrane. In terms of biological role, f(1)F(0) ATP synthase produces ATP from ADP in the presence of a proton or sodium gradient. F-type ATPases consist of two structural domains, F(1) containing the extramembraneous catalytic core and F(0) containing the membrane proton channel, linked together by a central stalk and a peripheral stalk. During catalysis, ATP synthesis in the catalytic domain of F(1) is coupled via a rotary mechanism of the central stalk subunits to proton translocation. Key component of the F(0) channel; it plays a direct role in translocation across the membrane. A homomeric c-ring of between 10-14 subunits forms the central stalk rotor element with the F(1) delta and epsilon subunits. This Citrifermentans bemidjiense (strain ATCC BAA-1014 / DSM 16622 / JCM 12645 / Bem) (Geobacter bemidjiensis) protein is ATP synthase subunit c.